Here is a 64-residue protein sequence, read N- to C-terminus: Large ribosomal subunit protein bL32 (64 aa).

Basic residues predominate over residues 1-15 (MAVPKRKVSKSRRDS). A disordered region spans residues 1 to 21 (MAVPKRKVSKSRRDSRRAQTF).

The protein belongs to the bacterial ribosomal protein bL32 family.

In Symbiobacterium thermophilum (strain DSM 24528 / JCM 14929 / IAM 14863 / T), this protein is Large ribosomal subunit protein bL32.